Consider the following 172-residue polypeptide: Lytic chitin monooxygenase (172 aa).

A signal peptide spans 1 to 30 (MHAGRKTAVLIGAALAPVIAVSLPAASASA). Positions 31 and 106 each coordinate Cu cation. The Chitin-binding type-4 domain occupies 31–168 (HGYISNPPSR…DNAFYACIDV (138 aa)).

Requires Cu(2+) as cofactor.

It localises to the secreted. It carries out the reaction [(1-&gt;4)-N-acetyl-beta-D-glucosaminyl]n+m + reduced acceptor + O2 = [(1-&gt;4)-N-acetyl-beta-D-glucosaminyl]m-1-(1-&gt;4)-2-(acetylamino)-2-deoxy-D-glucono-1,5-lactone + [(1-&gt;4)-N-acetyl-beta-D-glucosaminyl]n + acceptor + H2O.. It participates in glycan degradation; chitin degradation. Functionally, involved in chitin degradation. Catalyzes the oxidative cleavage of glycosidic bonds in chitin via a copper-dependent mechanism, leading to oxidized chitooligomers with degrees of polymerization of 4-6. Is not active on cellulose. In Streptomyces ambofaciens (strain ATCC 23877 / 3486 / DSM 40053 / JCM 4204 / NBRC 12836 / NRRL B-2516), this protein is Lytic chitin monooxygenase.